Consider the following 629-residue polypeptide: Serine/threonine-protein kinase ICK (629 aa).

A Protein kinase domain is found at 4–284 (YTTIKQLGDG…ASQALRYPYF (281 aa)). ATP-binding positions include 10-18 (LGDGTYGSV) and Lys33. Asp125 acts as the Proton acceptor in catalysis. Thr157 bears the Phosphothreonine; by CDK7 mark. Tyr159 is subject to Phosphotyrosine. At Ser161 the chain carries Phosphoserine. Disordered stretches follow at residues 292 to 376 (IISK…SLHN), 455 to 483 (SESV…SSAK), and 581 to 629 (SSLK…PSRR). Positions 296 to 306 (DSGKPQREVQD) are enriched in basic and acidic residues. Over residues 309 to 321 (GPPPYIKPAPPAQ) the composition is skewed to pro residues. Low complexity-rich tracts occupy residues 322-344 (APAK…PQHS) and 457-470 (SVGT…QASS).

Belongs to the protein kinase superfamily. CMGC Ser/Thr protein kinase family. CDC2/CDKX subfamily. Mg(2+) is required as a cofactor. In terms of processing, autophosphorylated on serine and threonine residues. Phosphorylation at Thr-157 by CDK7/Cak1p increases kinase activity. Highly expressed in colon and lung, lower levels present in heart, esophagus, stomach, small intestine and ovary. Localizes to the crypt region of large and small intestine.

It localises to the cytoplasm. Its subcellular location is the cytosol. It is found in the cell projection. The protein resides in the cilium. The protein localises to the nucleus. It localises to the cytoskeleton. Its subcellular location is the cilium basal body. The enzyme catalyses L-seryl-[protein] + ATP = O-phospho-L-seryl-[protein] + ADP + H(+). It carries out the reaction L-threonyl-[protein] + ATP = O-phospho-L-threonyl-[protein] + ADP + H(+). In terms of biological role, has an essential role in ciliogenesis, particularly in neuronal and retinal progenitor cells. Phosphorylates KIF3A. Involved in the control of ciliary length. Regulates the ciliary localization of SHH pathway components as well as the localization of IFT components at ciliary tips. May play a role in cardiac development. Regulates intraflagellar transport (IFT) speed and negatively regulates cilium length in a cAMP and mTORC1 signaling -dependent manner and this regulation requires its kinase activity. In Mus musculus (Mouse), this protein is Serine/threonine-protein kinase ICK (Cilk1).